The following is a 281-amino-acid chain: MLPATFKLCAAISYQHLRNVTGLRRQAAVAISQELSKLSCRSTGPSTWISQVRRRSSLLSSRLEEKPFSEMEMSYIKQGEEALQKSLSILGDQEGWKTETVADNGDKVLSKVLPDVGKVFRLEVVVDQPLDAVYSELVDNMEQMGDWNPSVKEVKILQRVGKDTLITHETAAAPPGNIVGPRDFVSVRCSRRRGSTCVLAGMSTTHGAMPEQQGFIRAENGPTCMVLRPLAGSPSQTKLTWLLSIDLKGWLPKTIINQVLSQTQVDFAKHLRQRMARAAGC.

The transit peptide at 1–63 directs the protein to the mitochondrion; the sequence is MLPATFKLCA…RRSSLLSSRL (63 aa). Positions 67-280 constitute an START domain; it reads PFSEMEMSYI…LRQRMARAAG (214 aa).

May interact with TSPO. Expressed principally in steroidogenic tissues as ovary (granulosa from the largest preovulatory follicle and stromal tissues) and adrenals.

The protein resides in the mitochondrion. It carries out the reaction cholesterol(in) = cholesterol(out). Its pathway is steroid metabolism; cholesterol metabolism. In terms of biological role, plays a key role in steroid hormone synthesis by enhancing the metabolism of cholesterol into pregnenolone. Mediates the transfer of cholesterol from the outer mitochondrial membrane to the inner mitochondrial membrane where it is cleaved to pregnenolone. The protein is Steroidogenic acute regulatory protein, mitochondrial (STAR) of Gallus gallus (Chicken).